A 466-amino-acid polypeptide reads, in one-letter code: Trigger factor (466 aa).

The 82-residue stretch at 162-243 (GDVVSIDLSA…VRSVKERELP (82 aa)) folds into the PPIase FKBP-type domain. Residues 428 to 466 (GNTIDTSEFFGKRVSAGEAEEAEPADEGAARAASDEATT) form a disordered region. Positions 457–466 (ARAASDEATT) are enriched in low complexity.

The protein belongs to the FKBP-type PPIase family. Tig subfamily.

The protein localises to the cytoplasm. The catalysed reaction is [protein]-peptidylproline (omega=180) = [protein]-peptidylproline (omega=0). Its function is as follows. Involved in protein export. Acts as a chaperone by maintaining the newly synthesized protein in an open conformation. Functions as a peptidyl-prolyl cis-trans isomerase. The polypeptide is Trigger factor (Mycobacterium bovis (strain BCG / Tokyo 172 / ATCC 35737 / TMC 1019)).